The primary structure comprises 563 residues: Putative ABC transporter ATP-binding protein SCO2324 (563 aa).

The region spanning 2-243 (IRFEDVSVTY…SPVYPPVVGL (242 aa)) is the ABC transporter 1 domain. Position 36-43 (36-43 (GPSGVGKS)) interacts with ATP. Positions 271–317 (AGREIPDHTPPPSAPLPAPPAPRPVTSRWRRRGKRPENPSAPTPYAA) are disordered. Residues 278–293 (HTPPPSAPLPAPPAPR) show a composition bias toward pro residues. The ABC transporter 2 domain maps to 317 to 545 (AEVRSLAVRR…SPSYAPQVAK (229 aa)). 349–356 (GRNGAGKS) lines the ATP pocket.

The protein belongs to the ABC transporter superfamily.

The protein resides in the cell membrane. Probably part of an ABC transporter complex. Responsible for energy coupling to the transport system. This Streptomyces coelicolor (strain ATCC BAA-471 / A3(2) / M145) protein is Putative ABC transporter ATP-binding protein SCO2324.